The sequence spans 31 residues: U13-ctenitoxin-Pn1b (31 aa).

Cystine bridges form between C3–C17, C10–C21, and C16–C30.

In terms of tissue distribution, expressed by the venom gland.

It is found in the secreted. Its function is as follows. Acts as a neurotoxin. The chain is U13-ctenitoxin-Pn1b from Phoneutria nigriventer (Brazilian armed spider).